Reading from the N-terminus, the 316-residue chain is Small neutral protease regulatory protein (316 aa).

Positions 1–56 (MRHLRALCAIADTGSVRRAARELGVSQPALTTQLRRIEQSLGAELFHRGRDGCRPT) constitute an HTH lysR-type domain. A DNA-binding region (H-T-H motif) is located at residues 16–35 (VRRAARELGVSQPALTTQLR).

It belongs to the LysR transcriptional regulatory family.

In terms of biological role, transcriptional trans-activator of the gene (mprA) for the small neutral protease. The polypeptide is Small neutral protease regulatory protein (mprR) (Streptomyces coelicolor).